A 344-amino-acid chain; its full sequence is Methionine import ATP-binding protein MetN (344 aa).

Positions 2-241 constitute an ABC transporter domain; that stretch reads IELQGLSQRF…PQHEVTRAMI (240 aa). ATP is bound at residue 38–45; it reads GRSGAGKS.

Belongs to the ABC transporter superfamily. Methionine importer (TC 3.A.1.24) family. The complex is composed of two ATP-binding proteins (MetN), two transmembrane proteins (MetI) and a solute-binding protein (MetQ).

The protein resides in the cell inner membrane. It catalyses the reaction L-methionine(out) + ATP + H2O = L-methionine(in) + ADP + phosphate + H(+). It carries out the reaction D-methionine(out) + ATP + H2O = D-methionine(in) + ADP + phosphate + H(+). In terms of biological role, part of the ABC transporter complex MetNIQ involved in methionine import. Responsible for energy coupling to the transport system. This is Methionine import ATP-binding protein MetN from Cupriavidus pinatubonensis (strain JMP 134 / LMG 1197) (Cupriavidus necator (strain JMP 134)).